A 354-amino-acid polypeptide reads, in one-letter code: Ornithine transcarbamylase, mitochondrial (354 aa).

A mitochondrion-targeting transit peptide spans 1-32 (MLFNLRILLNNAAFRNGHNFMVRNFRCGQPLQ). Lys-70 carries the post-translational modification N6-acetyllysine; alternate. At Lys-70 the chain carries N6-succinyllysine; alternate. Residue Lys-80 is modified to N6-succinyllysine. Lys-88 is modified (N6-acetyllysine; alternate). Lys-88 carries the N6-succinyllysine; alternate modification. Residue 90–93 (STRT) coordinates carbamoyl phosphate. Position 133 is a phosphoserine (Ser-133). Arg-141 is a binding site for carbamoyl phosphate. Position 144 is an N6-acetyllysine; alternate (Lys-144). At Lys-144 the chain carries N6-succinyllysine; alternate. Carbamoyl phosphate is bound by residues His-168 and Gln-171. L-ornithine is bound at residue Asn-199. 3 positions are modified to N6-acetyllysine; alternate: Lys-221, Lys-231, and Lys-238. An N6-succinyllysine; alternate mark is found at Lys-221, Lys-231, and Lys-238. Lys-243 carries the N6-acetyllysine modification. Asp-263, Ser-267, and Met-268 together coordinate L-ornithine. Lys-274 and Lys-289 each carry N6-succinyllysine. An N6-acetyllysine; alternate modification is found at Lys-292. Position 292 is an N6-succinyllysine; alternate (Lys-292). The active-site Proton acceptor is Cys-303. Residue 303-304 (CL) participates in carbamoyl phosphate binding. At Lys-307 the chain carries N6-acetyllysine; alternate. An N6-succinyllysine; alternate modification is found at Lys-307. Arg-330 serves as a coordination point for carbamoyl phosphate.

It belongs to the aspartate/ornithine carbamoyltransferase superfamily. OTCase family. As to quaternary structure, homotrimer. Acetylation at Lys-88 negatively regulates ornithine carbamoyltransferase activity in response to nutrient signals. As to expression, mainly expressed in liver and intestinal mucosa.

The protein resides in the mitochondrion matrix. The catalysed reaction is carbamoyl phosphate + L-ornithine = L-citrulline + phosphate + H(+). Its pathway is nitrogen metabolism; urea cycle; L-citrulline from L-ornithine and carbamoyl phosphate: step 1/1. Negatively regulated by lysine acetylation. Catalyzes the second step of the urea cycle, the condensation of carbamoyl phosphate with L-ornithine to form L-citrulline. The urea cycle ensures the detoxification of ammonia by converting it to urea for excretion. In Homo sapiens (Human), this protein is Ornithine transcarbamylase, mitochondrial.